Here is a 138-residue protein sequence, read N- to C-terminus: Large ribosomal subunit protein uL16 (138 aa).

The segment covering 1 to 13 (MLQPKRRKYRKEQ) has biased composition (basic residues). The segment at 1–20 (MLQPKRRKYRKEQKGRNTGI) is disordered.

This sequence belongs to the universal ribosomal protein uL16 family. As to quaternary structure, part of the 50S ribosomal subunit.

Its function is as follows. Binds 23S rRNA and is also seen to make contacts with the A and possibly P site tRNAs. This is Large ribosomal subunit protein uL16 from Burkholderia mallei (strain NCTC 10247).